A 245-amino-acid chain; its full sequence is Octanoyltransferase (245 aa).

One can recognise a BPL/LPL catalytic domain in the interval 54–242; the sequence is QNAHEQVWLL…SFEQIFGPII (189 aa). Substrate is bound by residues 93-100, 173-175, and 186-188; these read RGGEFTYH, AIG, and GVS. The active-site Acyl-thioester intermediate is Cys204.

Belongs to the LipB family.

It localises to the cytoplasm. The enzyme catalyses octanoyl-[ACP] + L-lysyl-[protein] = N(6)-octanoyl-L-lysyl-[protein] + holo-[ACP] + H(+). It participates in protein modification; protein lipoylation via endogenous pathway; protein N(6)-(lipoyl)lysine from octanoyl-[acyl-carrier-protein]: step 1/2. Functionally, catalyzes the transfer of endogenously produced octanoic acid from octanoyl-acyl-carrier-protein onto the lipoyl domains of lipoate-dependent enzymes. Lipoyl-ACP can also act as a substrate although octanoyl-ACP is likely to be the physiological substrate. The chain is Octanoyltransferase from Bartonella henselae (strain ATCC 49882 / DSM 28221 / CCUG 30454 / Houston 1) (Rochalimaea henselae).